Here is a 264-residue protein sequence, read N- to C-terminus: Nuclear egress protein 1 (264 aa).

The segment covering 1 to 12 (MTVHKNRFRRSR) has biased composition (basic residues). The segment at 1–22 (MTVHKNRFRRSRSLSVTHRIQK) is disordered. The CCCH-type zinc finger occupies 83-187 (CLEFSPYANE…HIVFQSRTLH (105 aa)).

Belongs to the herpesviridae NEC1 protein family. In terms of assembly, forms a heterohexameric complex with NEC2. Interacts with capsid vertex specific component 2/CVC2; this interaction directs the capsid to the host inner nuclear membrane to initiate budding. Post-translationally, phosphorylated at serine residues in the N-terminus. This phosphorylation regulates the localization within the inner nuclear membrane.

It localises to the host nucleus inner membrane. Functionally, plays an essential role in virion nuclear egress, the first step of virion release from infected cell. Within the host nucleus, NEC1 interacts with the newly formed capsid through the vertexes and directs it to the inner nuclear membrane by associating with NEC2. Induces the budding of the capsid at the inner nuclear membrane as well as its envelopment into the perinuclear space. There, the NEC1/NEC2 complex promotes the fusion of the enveloped capsid with the outer nuclear membrane and the subsequent release of the viral capsid into the cytoplasm where it will reach the secondary budding sites in the host Golgi or trans-Golgi network. The sequence is that of Nuclear egress protein 1 from Human herpesvirus 6B (HHV-6 variant B).